The following is a 644-amino-acid chain: Transcription factor cep-1 (644 aa).

Residues 223–418 (EKWMEIDVLK…NFCEREDAKQ (196 aa)) mediate DNA binding. Residues Cys307, His310, Cys361, and Cys365 each coordinate Zn(2+). Positions 528 to 555 (TNYSFRTLTLSTAEYTKVVEFLAREAKV) are required for tertiary structure stability of the protein.

It belongs to the p53 family. As to quaternary structure, homodimer. Interacts (via C-terminus domain) with prmt-5; not methylated by prmt-5. Interacts with cbp-1 (via HAT domain); cep-1 transcriptional activity may be inhibited by interaction with methylated cbp-1. Component of a complex that contains prmt-5 and cbp-1. Interacts with ape-1; the interaction inhibits pro-apoptotic activity of cep-1. Zn(2+) serves as cofactor. Phosphorylated in response to IR-induced DNA damage which is thought to be mediated by akt-1. Expressed in pharyngeal muscle and neurons.

Its subcellular location is the nucleus. Transcriptional activator that binds the same DNA consensus sequence as p53. Has a role in normal development to ensure proper meiotic chromosome segregation. Promotes apoptosis under conditions of cellular and genotoxic stress in response to DNA damage, hypoxia, or starvation. Regulates germline apoptosis in response to DNA damage. Its pro-apoptotic activity is inhibited when bound to ape-1 in vitro. Plays a role in cell cycle arrest in the germline in response to DNA damage by UV-C light. However, not required for survival in response to DNA damage induced by UV-C light, indicating that it is unlikely to be involved in DNA repair. Required for induction of ced-13 in response to DNA damage. Regulates DNA damage-induced apoptosis by inducing transcription of the programmed cell death activator egl-1. Regulates germline proliferation by activating phg-1. Modulates lifespan. The protein is Transcription factor cep-1 of Caenorhabditis elegans.